The chain runs to 278 residues: MTTRLDSRFADLKKQGRAAFVTFLMAGDPDLDTSLKLLQALPKAGADIIEIGMPFTDPMADGPAIQAAGLRALKAGTTLQKTLELVRAFRKADDATPLVLMGYYNPIYIYGVEPFLIDAKAAGVDGLIIVDLPPEEDAELCLPAIKAGLNFIRLATPTTDDKRLPAVLANTSGFVYYVSVTGITGAASADASAVSAAVTRIKRHTPLPVCVGFGIRTPEGARDIARHADGAVVGSALVDVLSRSLDAEGRATAATVPAVADLVASLARGVHGAAQAAE.

Residues glutamate 50 and aspartate 61 each act as proton acceptor in the active site.

The protein belongs to the TrpA family. As to quaternary structure, tetramer of two alpha and two beta chains.

It catalyses the reaction (1S,2R)-1-C-(indol-3-yl)glycerol 3-phosphate + L-serine = D-glyceraldehyde 3-phosphate + L-tryptophan + H2O. The protein operates within amino-acid biosynthesis; L-tryptophan biosynthesis; L-tryptophan from chorismate: step 5/5. Its function is as follows. The alpha subunit is responsible for the aldol cleavage of indoleglycerol phosphate to indole and glyceraldehyde 3-phosphate. This is Tryptophan synthase alpha chain from Rhodopseudomonas palustris (strain BisA53).